Here is a 336-residue protein sequence, read N- to C-terminus: Heme A synthase (336 aa).

The next 8 helical transmembrane spans lie at L12–L32, L97–F117, I130–I150, S161–I181, L194–S214, F256–Y276, Y285–I305, and I310–I330. H258 is a heme binding site. H316 contacts heme.

Belongs to the COX15/CtaA family. Type 2 subfamily. In terms of assembly, interacts with CtaB. The cofactor is heme b.

The protein resides in the cell membrane. It carries out the reaction Fe(II)-heme o + 2 A + H2O = Fe(II)-heme a + 2 AH2. It participates in porphyrin-containing compound metabolism; heme A biosynthesis; heme A from heme O: step 1/1. Functionally, catalyzes the conversion of heme O to heme A by two successive hydroxylations of the methyl group at C8. The first hydroxylation forms heme I, the second hydroxylation results in an unstable dihydroxymethyl group, which spontaneously dehydrates, resulting in the formyl group of heme A. This is Heme A synthase from Pelagibacter ubique (strain HTCC1062).